The primary structure comprises 817 residues: TPR repeat-containing protein C19B12.01 (817 aa).

Disordered regions lie at residues 276 to 298 (DQKS…PNHP) and 386 to 413 (GKSP…DGEN). TPR repeat units follow at residues 459–492 (LQMW…DPYD), 521–554 (APAQ…NPLS), 555–588 (YPTW…NPED), and 625–658 (WRIW…KGKD).

In Schizosaccharomyces pombe (strain 972 / ATCC 24843) (Fission yeast), this protein is TPR repeat-containing protein C19B12.01.